The chain runs to 730 residues: Procollagen-lysine,2-oxoglutarate 5-dioxygenase 1 (730 aa).

The first 20 residues, 1–20 (MVPPAVLLPWVVLPLLGVQG), serve as a signal peptide directing secretion. Asn-200, Asn-403, and Asn-541 each carry an N-linked (GlcNAc...) asparagine glycan. In terms of domain architecture, Fe2OG dioxygenase spans 639–730 (QFELAFVVRY…RYIAVSFIDP (92 aa)). Fe cation is bound by residues His-659 and Asp-661. N-linked (GlcNAc...) asparagine glycosylation occurs at Asn-689. His-711 contacts Fe cation. Arg-721 is a catalytic residue.

Homodimer. The cofactor is Fe(2+). L-ascorbate is required as a cofactor.

The protein resides in the rough endoplasmic reticulum membrane. The enzyme catalyses L-lysyl-[collagen] + 2-oxoglutarate + O2 = (5R)-5-hydroxy-L-lysyl-[collagen] + succinate + CO2. In terms of biological role, forms hydroxylysine residues in -Xaa-Lys-Gly- sequences in collagens. These hydroxylysines serve as sites of attachment for carbohydrate units and are essential for the stability of the intermolecular collagen cross-links. The chain is Procollagen-lysine,2-oxoglutarate 5-dioxygenase 1 (PLOD1) from Gallus gallus (Chicken).